Consider the following 173-residue polypeptide: Development-specific protein S (173 aa).

2 Beta/gamma crystallin 'Greek key' domains span residues 2–46 and 48–86; these read ANIT…KVPP and VKAI…RVIS. Residues Tyr8, Asn37, Thr38, Ser40, Gln54, Asn77, Asn78, and Ser80 each contribute to the Ca(2+) site. The tract at residues 87 to 90 is connecting peptide; sequence VPVQ. 2 consecutive Beta/gamma crystallin 'Greek key' domains span residues 91 to 135 and 136 to 173; these read PRAR…KPQG and LAVV…IRIS.

The protein belongs to the beta/gamma-crystallin family.

Functionally, protein S, induced in large amounts during fruiting body formation, assembles on the surface of myxospores in the presence of calcium ions. The sequence is that of Development-specific protein S (tps) from Myxococcus xanthus.